Here is a 31-residue protein sequence, read N- to C-terminus: Cytochrome b6-f complex subunit 6 (31 aa).

Residues 3–23 traverse the membrane as a helical segment; it reads LIIGYIILLACAFGLAAGLYF.

It belongs to the PetL family. The 4 large subunits of the cytochrome b6-f complex are cytochrome b6, subunit IV (17 kDa polypeptide, PetD), cytochrome f and the Rieske protein, while the 4 small subunits are PetG, PetL, PetM and PetN. The complex functions as a dimer.

It is found in the plastid. The protein resides in the chloroplast thylakoid membrane. Its function is as follows. Component of the cytochrome b6-f complex, which mediates electron transfer between photosystem II (PSII) and photosystem I (PSI), cyclic electron flow around PSI, and state transitions. PetL is important for photoautotrophic growth as well as for electron transfer efficiency and stability of the cytochrome b6-f complex. This chain is Cytochrome b6-f complex subunit 6, found in Guillardia theta (Cryptophyte).